Here is a 626-residue protein sequence, read N- to C-terminus: Ankyrin repeat domain-containing protein 13B (626 aa).

Met-1 is modified (N-acetylmethionine). ANK repeat units lie at residues 47-76 and 80-109; these read RGRT…DVGR and SGWT…YQRV. The segment at 442–470 is disordered; it reads PVPSVRGSPGSETPSPGSDSSSVSSSSST. Low complexity predominate over residues 448-470; the sequence is GSPGSETPSPGSDSSSVSSSSST. In terms of domain architecture, UIM 1 spans 503–522; that stretch reads EDDDLLRFAIQQSLLEAGSE. The segment at 534–614 is disordered; the sequence is NSKPGTHPMS…RRRVRQEEEE (81 aa). The segment covering 554–575 has biased composition (pro residues); it reads PPTPQRQPMPPAPVPSPRPSPG. UIM domains are found at residues 585-604 and 610-626; these read SYDE…QEER and QEEE…LTEQ.

In terms of assembly, interacts with EGFR (ubiquitinated); the interaction is direct and may regulate EGFR internalization.

Its subcellular location is the cell membrane. It localises to the late endosome. The protein resides in the early endosome. Functionally, ubiquitin-binding protein that specifically recognizes and binds 'Lys-63'-linked ubiquitin. Does not bind 'Lys-48'-linked ubiquitin. Positively regulates the internalization of ligand-activated EGFR by binding to the Ub moiety of ubiquitinated EGFR at the cell membrane. This chain is Ankyrin repeat domain-containing protein 13B (Ankrd13b), found in Mus musculus (Mouse).